The chain runs to 309 residues: Mycothiol acetyltransferase (309 aa).

2 N-acetyltransferase domains span residues 16–158 and 166–309; these read ETLA…LDLP and VSVR…RTET. A 1D-myo-inositol 2-(L-cysteinylamino)-2-deoxy-alpha-D-glucopyranoside-binding site is contributed by Glu47. Residue 92 to 94 coordinates acetyl-CoA; sequence LVV. 1D-myo-inositol 2-(L-cysteinylamino)-2-deoxy-alpha-D-glucopyranoside contacts are provided by Glu193, Lys232, and Glu241. Residues 245–247 and 252–258 each bind acetyl-CoA; these read LGI and QGGGLGK. Tyr279 contacts 1D-myo-inositol 2-(L-cysteinylamino)-2-deoxy-alpha-D-glucopyranoside.

This sequence belongs to the acetyltransferase family. MshD subfamily. As to quaternary structure, monomer.

The catalysed reaction is 1D-myo-inositol 2-(L-cysteinylamino)-2-deoxy-alpha-D-glucopyranoside + acetyl-CoA = mycothiol + CoA + H(+). Catalyzes the transfer of acetyl from acetyl-CoA to desacetylmycothiol (Cys-GlcN-Ins) to form mycothiol. The polypeptide is Mycothiol acetyltransferase (Streptomyces coelicolor (strain ATCC BAA-471 / A3(2) / M145)).